A 486-amino-acid chain; its full sequence is UDP-N-acetylmuramate--L-alanine ligase (486 aa).

ATP is bound at residue 123–129; the sequence is GTHGKTT.

It belongs to the MurCDEF family.

The protein resides in the cytoplasm. It catalyses the reaction UDP-N-acetyl-alpha-D-muramate + L-alanine + ATP = UDP-N-acetyl-alpha-D-muramoyl-L-alanine + ADP + phosphate + H(+). It functions in the pathway cell wall biogenesis; peptidoglycan biosynthesis. Cell wall formation. The chain is UDP-N-acetylmuramate--L-alanine ligase from Pseudomonas syringae pv. syringae (strain B728a).